Reading from the N-terminus, the 414-residue chain is MSAEKTENLSWIDKRFPLSETWRNHLSEYYAPKNLNFWSFFGSLAILTLVIQIVTGVWLAMSYKPDAGLAFASVEYIMRDVDWGWLIRYMHSTGASMFFIVIYLHMFRGLLWGSYRKPRELLWMIGVVIYLVMMATAFFGYLLPWGQMSYWGAQVIVNLFAAVPVVGEDLSVWVRGDFVISDATLNRFFAFHFLLPFLLAGLVFLHIVALHHVGSNNPDGIEIKEGPKGNRWSDKAPADGIPFHPYYTVKDLMGVVVFLAIFGYVMFFNPTMGGLFLEAPNFQPANPMQTPAHIAPVWYFTPFYAMLRAVPPMYGSQFPGVVVMFAAILILFVLPWLDRSPVKSMRYKGPIFKWATGIFVVSFVALAWLGIQPASDFYTLLSQIFTVLYFAYFLLMPIYSSLDKTKPVPERVTS.

Helical transmembrane passes span 40 to 60 (FFGS…VWLA) and 84 to 104 (GWLI…VIYL). Heme b is bound by residues histidine 91 and histidine 105. A run of 8 helical transmembrane segments spans residues 121 to 141 (LLWM…FFGY), 154 to 174 (QVIV…SVWV), 188 to 208 (FFAF…LHIV), 252 to 272 (LMGV…NPTM), 294 to 314 (IAPV…PPMY), 317 to 337 (QFPG…LPWL), 351 to 371 (IFKW…WLGI), and 378 to 398 (YTLL…LMPI). Residues histidine 192 and histidine 206 each coordinate heme b.

The protein belongs to the cytochrome b family. The main subunits of complex b-c1 are: cytochrome b, cytochrome c1 and the Rieske protein. Heme b is required as a cofactor.

It localises to the cell membrane. Component of the ubiquinol-cytochrome c reductase complex (complex III or cytochrome b-c1 complex), which is a respiratory chain that generates an electrochemical potential coupled to ATP synthesis. The protein is Cytochrome b (petB) of Allochromatium vinosum (strain ATCC 17899 / DSM 180 / NBRC 103801 / NCIMB 10441 / D) (Chromatium vinosum).